The primary structure comprises 247 residues: MTILFLTMVISYFGCMKAAPMKEANVRGQGSLAYPGVRTHGTLESVNGPKAGSRRLTSLADTFEHVIEELLDEDQKGRPNEENSKDADLYTSRVMLSSQVPLEPPLLFLLEEYKNYLDAANMSVRVRRHSDPARRGELSVCDGISEWVTAADKKTAVDMSGGTVTVLEKVPVSKGQLKQYFYETKCNPMGYTKEGCRGIDKRHWNSQCRTTQSYVRALTMDSKKRIGWRFIRIDTSCVCTLTIKRGR.

The first 18 residues, 1-18, serve as a signal peptide directing secretion; sequence MTILFLTMVISYFGCMKA. Positions 19–128 are excised as a propeptide; that stretch reads APMKEANVRG…AANMSVRVRR (110 aa). N-linked (GlcNAc...) asparagine glycosylation is present at Asn-121. 3 disulfide bridges follow: Cys-141-Cys-208, Cys-186-Cys-237, and Cys-196-Cys-239.

It belongs to the NGF-beta family. As to quaternary structure, monomers and homodimers. Binds to NTRK2/TRKB. Can form heterodimers with other neurotrophin family members, such as NTF3 and NTF4 (in vitro), but the physiological relevance of this is not clear. BDNF precursor form: interacts with the heterodimer formed by NGFR and SORCS2. Mature BDNF has much lower affinity for the heterodimer formed by NGFR and SORCS2. Post-translationally, N-glycosylated and glycosulfated, contrary to mature BDNF. Mature BDNF is produced by proteolytic removal of the propeptide, catalyzed by a FURIN family member. In addition, the precursor form is proteolytically cleaved within the propeptide, but this is not an obligatory intermediate for the production of mature BDNF. Can be converted into mature BDNF by plasmin (PLG).

Its subcellular location is the secreted. Its function is as follows. Important signaling molecule that activates signaling cascades downstream of NTRK2. During development, promotes the survival and differentiation of selected neuronal populations of the peripheral and central nervous systems. Participates in axonal growth, pathfinding and in the modulation of dendritic growth and morphology. Major regulator of synaptic transmission and plasticity at adult synapses in many regions of the CNS. The versatility of BDNF is emphasized by its contribution to a range of adaptive neuronal responses including long-term potentiation (LTP), long-term depression (LTD), certain forms of short-term synaptic plasticity, as well as homeostatic regulation of intrinsic neuronal excitability. Important signaling molecule that activates signaling cascades downstream of NTRK2. Activates signaling cascades via the heterodimeric receptor formed by NGFR and SORCS2. Signaling via NGFR and SORCS2 plays a role in synaptic plasticity and long-term depression (LTD). Binding to NGFR and SORCS2 promotes neuronal apoptosis. Promotes neuronal growth cone collapse. The polypeptide is Neurotrophic factor BDNF precursor form (BDNF) (Felis catus (Cat)).